A 120-amino-acid chain; its full sequence is Large ribosomal subunit protein uL22 (120 aa).

Belongs to the universal ribosomal protein uL22 family. Part of the 50S ribosomal subunit.

This protein binds specifically to 23S rRNA; its binding is stimulated by other ribosomal proteins, e.g. L4, L17, and L20. It is important during the early stages of 50S assembly. It makes multiple contacts with different domains of the 23S rRNA in the assembled 50S subunit and ribosome. In terms of biological role, the globular domain of the protein is located near the polypeptide exit tunnel on the outside of the subunit, while an extended beta-hairpin is found that lines the wall of the exit tunnel in the center of the 70S ribosome. The protein is Large ribosomal subunit protein uL22 of Borreliella afzelii (strain PKo) (Borrelia afzelii).